Here is a 327-residue protein sequence, read N- to C-terminus: GTP 3',8-cyclase (327 aa).

One can recognise a Radical SAM core domain in the interval serine 21–lysine 233. A GTP-binding site is contributed by arginine 30. [4Fe-4S] cluster-binding residues include cysteine 37 and cysteine 41. Tyrosine 43 is an S-adenosyl-L-methionine binding site. Residue cysteine 44 participates in [4Fe-4S] cluster binding. Arginine 79 contacts GTP. An S-adenosyl-L-methionine-binding site is contributed by glycine 83. Threonine 109 serves as a coordination point for GTP. Serine 133 contacts S-adenosyl-L-methionine. Lysine 169 lines the GTP pocket. Methionine 203 is an S-adenosyl-L-methionine binding site. Residues cysteine 265 and cysteine 268 each coordinate [4Fe-4S] cluster. Arginine 270–arginine 272 lines the GTP pocket. Residue cysteine 282 participates in [4Fe-4S] cluster binding.

It belongs to the radical SAM superfamily. MoaA family. In terms of assembly, monomer and homodimer. [4Fe-4S] cluster is required as a cofactor.

The catalysed reaction is GTP + AH2 + S-adenosyl-L-methionine = (8S)-3',8-cyclo-7,8-dihydroguanosine 5'-triphosphate + 5'-deoxyadenosine + L-methionine + A + H(+). Its pathway is cofactor biosynthesis; molybdopterin biosynthesis. In terms of biological role, catalyzes the cyclization of GTP to (8S)-3',8-cyclo-7,8-dihydroguanosine 5'-triphosphate. This Synechocystis sp. (strain ATCC 27184 / PCC 6803 / Kazusa) protein is GTP 3',8-cyclase.